The following is a 197-amino-acid chain: GTP cyclohydrolase-2 (197 aa).

GTP is bound at residue Arg50–Glu54. Zn(2+) is bound by residues Cys55, Cys66, and Cys68. Residues Gln71, Glu93–Arg95, and Thr115 each bind GTP. The active-site Proton acceptor is Asp127. Arg129 functions as the Nucleophile in the catalytic mechanism. Thr150 and Lys155 together coordinate GTP.

This sequence belongs to the GTP cyclohydrolase II family. Requires Zn(2+) as cofactor.

The enzyme catalyses GTP + 4 H2O = 2,5-diamino-6-hydroxy-4-(5-phosphoribosylamino)-pyrimidine + formate + 2 phosphate + 3 H(+). Its pathway is cofactor biosynthesis; riboflavin biosynthesis; 5-amino-6-(D-ribitylamino)uracil from GTP: step 1/4. Catalyzes the conversion of GTP to 2,5-diamino-6-ribosylamino-4(3H)-pyrimidinone 5'-phosphate (DARP), formate and pyrophosphate. This Tolumonas auensis (strain DSM 9187 / NBRC 110442 / TA 4) protein is GTP cyclohydrolase-2.